Reading from the N-terminus, the 253-residue chain is Oxidoreductase AOL_s00215g277 (253 aa).

A helical transmembrane segment spans residues 181–203; the sequence is FFGYWLTVILGYYIGSLLGYQPF.

The protein belongs to the oxidoreductase OpS7 family.

The protein localises to the membrane. It participates in secondary metabolite biosynthesis; terpenoid biosynthesis. Functionally, oxidoreductase; part of the gene cluster that mediates the biosynthesis of sesquiterpenyl epoxy-cyclohexenoids (SECs) such as anthrobotrisins and arthrosporols, metabolites that possess a novel hybrid carbon skeleton consisting of a polyketide-derived epoxycyclohexenol combined with a terpenoid-derived monocyclic sesquiterpenol substructure (PKS-PTS hybrid). The SEC pathway plays an important role for fungal soil colonization via decreasing fungal nematode-capturing ability. Within the pathway, the oxidoreductase AOL_s00215g277 seems to play a role in the farnesylation step of toluquinol to produce farnesyl hydroquinone, the hybrid precursor for biosynthesis of SECs. The pathway begins with the biosynthesis of 6-methylsalicylic acid (6-MSA), the first precursor of the polyketide-derived epoxycyclohexenol in arthrosporols, by the polyketide synthase (PKS) AOL_s00215g283 via condensation of 1 acetate and 3 malonate units. The 6-methylsalicylic acid decarboxylase AOL_s00215g281 then catalyzes the decarboxylation of 6-methylsalicylic acid to yield m-cresol. The cytochrome P450 monooxygenase AOL_s00215g282 further oxidizes m-cresol to yield toluquinol. With the assistance of the oxidoreductase AOL_s00215g277, the polyprenyl transferase AOL_s00215g276 catalyzes the farnesylation of toluquinol to produce farnesyl hydroquinone, the hybrid precursor for biosynthesis of SECs. Farnesyl hydroquinone undergoes epoxidation and then subsequent dehydrogenation to form farnesyl epoxy-quinone, the first and simplest SEC. The cytochrome P450 monooxygenase AOL_s00215g278 and the FAD-dependent monooxygenase AOL_s00215g279 might be involved in the oxygenation of the phenol moiety, most likely in the epoxy formation. The cytochrome P450 monooxygenases AOL_s00215g274 and AOL_s00215g280 are involved in specific regional ketone reductions at respectively C-4 and C-1 of farnesyl epoxy-quinone PubMed:33823587. In Arthrobotrys oligospora (strain ATCC 24927 / CBS 115.81 / DSM 1491) (Nematode-trapping fungus), this protein is Oxidoreductase AOL_s00215g277.